The following is a 315-amino-acid chain: Zinc metalloproteinase nas-4 (315 aa).

Residues 1 to 20 (MMTIQRYSLVFCAIFATCWT) form the signal peptide. Asparagine 71 carries an N-linked (GlcNAc...) asparagine glycan. The 196-residue stretch at 95 to 290 (NAIKQIYRRW…RKINKLYNCP (196 aa)) folds into the Peptidase M12A domain. 2 disulfides stabilise this stretch: cysteine 137–cysteine 289 and cysteine 160–cysteine 179. Histidine 187 contributes to the Zn(2+) binding site. Glutamate 188 is a catalytic residue. Residues histidine 191 and histidine 197 each coordinate Zn(2+). Positions 291–315 (GVSGNNNNNNNNQINSNSIVNHPQV) are disordered.

It depends on Zn(2+) as a cofactor. Digestive tract. Found in the pharynx cells of the procorpus, metacorpus, isthmus and terminal bulb, and in the terminal bulb lumen.

The protein localises to the secreted. Metalloprotease. May be involved in digestion. The protein is Zinc metalloproteinase nas-4 (nas-4) of Caenorhabditis elegans.